A 143-amino-acid polypeptide reads, in one-letter code: Ribosome maturation factor RimP (143 aa).

The protein belongs to the RimP family.

Its subcellular location is the cytoplasm. Its function is as follows. Required for maturation of 30S ribosomal subunits. The chain is Ribosome maturation factor RimP from Borrelia turicatae (strain 91E135).